The primary structure comprises 90 residues: Small ribosomal subunit protein uS17 (90 aa).

It belongs to the universal ribosomal protein uS17 family. As to quaternary structure, part of the 30S ribosomal subunit.

Its function is as follows. One of the primary rRNA binding proteins, it binds specifically to the 5'-end of 16S ribosomal RNA. The sequence is that of Small ribosomal subunit protein uS17 from Paraburkholderia phytofirmans (strain DSM 17436 / LMG 22146 / PsJN) (Burkholderia phytofirmans).